A 310-amino-acid polypeptide reads, in one-letter code: N-acetyl-gamma-glutamyl-phosphate reductase (310 aa).

C117 is a catalytic residue.

It belongs to the NAGSA dehydrogenase family. Type 2 subfamily.

The protein localises to the cytoplasm. It catalyses the reaction N-acetyl-L-glutamate 5-semialdehyde + phosphate + NADP(+) = N-acetyl-L-glutamyl 5-phosphate + NADPH + H(+). It functions in the pathway amino-acid biosynthesis; L-arginine biosynthesis; N(2)-acetyl-L-ornithine from L-glutamate: step 3/4. In terms of biological role, catalyzes the NADPH-dependent reduction of N-acetyl-5-glutamyl phosphate to yield N-acetyl-L-glutamate 5-semialdehyde. The chain is N-acetyl-gamma-glutamyl-phosphate reductase from Brucella abortus (strain S19).